Consider the following 513-residue polypeptide: Na(+)/H(+) antiporter NhaB (513 aa).

11 helical membrane-spanning segments follow: residues 21 to 41, 88 to 108, 119 to 139, 143 to 163, 208 to 228, 247 to 267, 303 to 323, 357 to 377, 389 to 409, 447 to 467, and 477 to 497; these read ITIV…SPFI, IIAN…IYFM, LLLS…SAAF, FLDA…FYGV, VGTA…LIIA, LPVL…GVFG, ALIG…VGII, LVVF…APII, LALF…VFVA, ATPN…APLI, and MALP…EYIL.

It belongs to the NhaB Na(+)/H(+) (TC 2.A.34) antiporter family.

Its subcellular location is the cell inner membrane. It carries out the reaction 2 Na(+)(in) + 3 H(+)(out) = 2 Na(+)(out) + 3 H(+)(in). Functionally, na(+)/H(+) antiporter that extrudes sodium in exchange for external protons. The protein is Na(+)/H(+) antiporter NhaB of Pasteurella multocida (strain Pm70).